The following is a 554-amino-acid chain: Dihydroxy-acid dehydratase (554 aa).

D78 is a Mg(2+) binding site. C119 is a binding site for [2Fe-2S] cluster. The Mg(2+) site is built by D120 and K121. The residue at position 121 (K121) is an N6-carboxylysine. A [2Fe-2S] cluster-binding site is contributed by C191. Mg(2+) is bound at residue E444. S470 (proton acceptor) is an active-site residue.

The protein belongs to the IlvD/Edd family. Homodimer. [2Fe-2S] cluster is required as a cofactor. It depends on Mg(2+) as a cofactor.

The enzyme catalyses (2R)-2,3-dihydroxy-3-methylbutanoate = 3-methyl-2-oxobutanoate + H2O. The catalysed reaction is (2R,3R)-2,3-dihydroxy-3-methylpentanoate = (S)-3-methyl-2-oxopentanoate + H2O. Its pathway is amino-acid biosynthesis; L-isoleucine biosynthesis; L-isoleucine from 2-oxobutanoate: step 3/4. The protein operates within amino-acid biosynthesis; L-valine biosynthesis; L-valine from pyruvate: step 3/4. Functionally, functions in the biosynthesis of branched-chain amino acids. Catalyzes the dehydration of (2R,3R)-2,3-dihydroxy-3-methylpentanoate (2,3-dihydroxy-3-methylvalerate) into 2-oxo-3-methylpentanoate (2-oxo-3-methylvalerate) and of (2R)-2,3-dihydroxy-3-methylbutanoate (2,3-dihydroxyisovalerate) into 2-oxo-3-methylbutanoate (2-oxoisovalerate), the penultimate precursor to L-isoleucine and L-valine, respectively. This is Dihydroxy-acid dehydratase from Nitratidesulfovibrio vulgaris (strain DP4) (Desulfovibrio vulgaris).